Consider the following 465-residue polypeptide: Cysteine--tRNA ligase (465 aa).

A Zn(2+)-binding site is contributed by C28. Positions 30–40 (MTVYDYCHLGH) match the 'HIGH' region motif. Residues C209, H234, and E238 each contribute to the Zn(2+) site. Positions 266-270 (KMSKS) match the 'KMSKS' region motif. K269 provides a ligand contact to ATP.

The protein belongs to the class-I aminoacyl-tRNA synthetase family. As to quaternary structure, monomer. The cofactor is Zn(2+).

The protein localises to the cytoplasm. It catalyses the reaction tRNA(Cys) + L-cysteine + ATP = L-cysteinyl-tRNA(Cys) + AMP + diphosphate. In Methylococcus capsulatus (strain ATCC 33009 / NCIMB 11132 / Bath), this protein is Cysteine--tRNA ligase.